A 220-amino-acid chain; its full sequence is Putative DNA repair glycosylase MJ1434 (220 aa).

Residues Cys202, Cys208, Cys211, and Cys217 each coordinate [4Fe-4S] cluster.

This sequence belongs to the Nth/MutY family. [4Fe-4S] cluster serves as cofactor.

The protein is Putative DNA repair glycosylase MJ1434 of Methanocaldococcus jannaschii (strain ATCC 43067 / DSM 2661 / JAL-1 / JCM 10045 / NBRC 100440) (Methanococcus jannaschii).